Here is a 348-residue protein sequence, read N- to C-terminus: Trace amine-associated receptor 9 (348 aa).

Residues 1-33 are Extracellular-facing; it reads MVNNFSQAEAVELCYKNVNESCIKTPYSPGPRS. N-linked (GlcNAc...) asparagine glycosylation is found at N4 and N19. 2 disulfide bridges follow: C22-C186 and C105-C190. Residues 34 to 58 form a helical membrane-spanning segment; it reads ILYAVLGFGAVLAAFGNLLVMIAIL. At 59-68 the chain is on the cytoplasmic side; that stretch reads HFKQLHTPTN. Residues 69 to 90 traverse the membrane as a helical segment; that stretch reads FLIASLACADFLVGVTVMPFST. Over 91–105 the chain is Extracellular; the sequence is VRSVESCWYFGDSYC. The helical transmembrane segment at 106 to 128 threads the bilayer; it reads KFHTCFDTSFCFASLFHLCCISV. The spermidine site is built by D112 and T113. The Cytoplasmic segment spans residues 129-148; that stretch reads DRYIAVTDPLTYPTKFTVSV. A helical membrane pass occupies residues 149–170; the sequence is SGICIVLSWFFSVTYSFSIFYT. Topologically, residues 171 to 196 are extracellular; the sequence is GANEEGIEELVVALTCVGGCQAPLNQ. Positions 174–187 are extracellular Loop 2 (ECL2); sequence EEGIEELVVALTCV. The chain crosses the membrane as a helical span at residues 197-218; the sequence is NWVLLCFLLFFIPNVAMVFIYS. Residues 219 to 256 lie on the Cytoplasmic side of the membrane; the sequence is KIFLVAKHQARKIESTASQAQSSSESYKERVAKRERKA. The helical transmembrane segment at 257–280 threads the bilayer; that stretch reads AKTLGIAMAAFLVSWLPYLVDAVI. Topologically, residues 281 to 293 are extracellular; the sequence is DAYMNFITPPYVY. A helical membrane pass occupies residues 294–314; it reads EILVWCVYYNSAMNPLIYAFF. Over 315-348 the chain is Cytoplasmic; the sequence is YQWFGKAIKLIVSGKVLRTDSSTTNLFSEEVETD.

The protein belongs to the G-protein coupled receptor 1 family.

The protein localises to the cell membrane. Its function is as follows. Olfactory receptor specific for trace amines, such as N,N-dimethylcyclohexylamine (DMCHA) and beta-phenylethylamine (beta-PEA). In contrast to mouse and rat orthologs, not activated by triethylamine, cadaverine (CAD) or spermidine. Trace amine compounds are enriched in animal body fluids and act on trace amine-associated receptors (TAARs) to elicit both intraspecific and interspecific innate behaviors. Trace amine-binding causes a conformation change that triggers signaling via G(s)-class of G alpha proteins (GNAL or GNAS). In mature olfactory sensory neurons, TAAR9 is coupled with GNAL/G(olf)G alpha protein and mediates activation of adenylate cyclase activity to activate cAMP signaling and eventually transmit odorant signals to achieve membrane depolarization. In immature olfactory sensory neurons, TAAR9 is coupled with GNAS/G(s) G alpha proteins. In Homo sapiens (Human), this protein is Trace amine-associated receptor 9.